The primary structure comprises 106 residues: Foxo1-corepressor (106 aa).

The interval 1–44 is disordered; it reads MGGPTRRHQEEGSAECLGGPSTRAAPGPGLRDFHFTTAGPSKAD. Positions 78–87 match the Nuclear export signal motif; sequence IGTLYIRLDL. Threonine 93 is modified (phosphothreonine; by PKA).

In terms of assembly, interacts with FOXO1 (via N-terminal domain); the interaction is direct, occurs in a forskolin-independent manner that prevents SIRT1 binding to FOXO1. Interacts with FOXO3. Does not interact with FOXO4. In terms of processing, phosphorylated at Thr-93 by PKA, leading to import into the nucleus. In terms of tissue distribution, expressed in adipocytes. Expressed in brown and white adipose tissue but not in liver. Protein levels in brown and white adipose tissues decrease following fasting (at protein level). Expressed in white and brown adipose tissues. Expressed in adipocytes. Not expressed in liver, skeletal muscle and brain.

Its subcellular location is the cytoplasm. The protein localises to the cytosol. It is found in the nucleus. Its function is as follows. Regulator of adipocytes that acts by repressing FOXO1 transcriptional activity. Acts by promoting acetylation of FOXO1, both by preventing the interaction between FOXO1 and SIRT1 deacetylase, and by mediating acetyltransferase activity in vitro. Regulates insulin sensitivity and energy metabolism. The sequence is that of Foxo1-corepressor (Fcor) from Mus musculus (Mouse).